Reading from the N-terminus, the 155-residue chain is Protein FAM201A (155 aa).

The tract at residues 130–155 (QDQGCGQHRPHSPRLVDIALPGGGWT) is disordered.

The sequence is that of Protein FAM201A (FAM201A) from Homo sapiens (Human).